The following is a 31-amino-acid chain: MEALVYTFLLVGTLGIIFFSIFFREPPRIIK.

A helical membrane pass occupies residues 3-23; the sequence is ALVYTFLLVGTLGIIFFSIFF.

This sequence belongs to the PsbT family. PSII is composed of 1 copy each of membrane proteins PsbA, PsbB, PsbC, PsbD, PsbE, PsbF, PsbH, PsbI, PsbJ, PsbK, PsbL, PsbM, PsbT, PsbY, PsbZ, Psb30/Ycf12, at least 3 peripheral proteins of the oxygen-evolving complex and a large number of cofactors. It forms dimeric complexes.

The protein localises to the plastid. Its subcellular location is the chloroplast thylakoid membrane. Its function is as follows. Found at the monomer-monomer interface of the photosystem II (PS II) dimer, plays a role in assembly and dimerization of PSII. PSII is a light-driven water plastoquinone oxidoreductase, using light energy to abstract electrons from H(2)O, generating a proton gradient subsequently used for ATP formation. This chain is Photosystem II reaction center protein T, found in Tupiella akineta (Green alga).